The primary structure comprises 102 residues: Monothiol glutaredoxin-S9 (102 aa).

Residues 1–101 (MDKVVRMSSE…PLVKPFQANL (101 aa)) form the Glutaredoxin domain. Position 21 (cysteine 21) interacts with [2Fe-2S] cluster.

This sequence belongs to the glutaredoxin family. CC-type subfamily.

The protein resides in the cytoplasm. Functionally, may only reduce GSH-thiol disulfides, but not protein disulfides. The polypeptide is Monothiol glutaredoxin-S9 (GRXS9) (Arabidopsis thaliana (Mouse-ear cress)).